We begin with the raw amino-acid sequence, 322 residues long: Pre-mRNA-splicing factor NTR2 (322 aa).

A disordered region spans residues 1 to 30; it reads MAIKKRNKIRLPSGSPEEVGIDGSAHKPMQ. Ser-40 bears the Phosphoserine mark. The disordered stretch occupies residues 113-137; the sequence is LLSDSSEAGSSSEGEHISSIPTRGE. The span at 115–132 shows a compositional bias: low complexity; the sequence is SDSSEAGSSSEGEHISSI. Residues Ser-153 and Ser-197 each carry the phosphoserine modification.

In terms of assembly, component of the NTR complex (NTC-related complex), composed of NTR1, NTR2 and PRP43. Interacts with CLF1, NTR1 and PRP43.

It localises to the cytoplasm. Its subcellular location is the nucleus. Its function is as follows. Involved in pre-mRNA splicing and spliceosome disassembly. Promotes release of excised lariat intron from the spliceosome by acting as a receptor for PRP43. This targeting of PRP43 leads to disassembly of the spliceosome with the separation of the U2, U5, U6 snRNPs and the NTC complex. The protein is Pre-mRNA-splicing factor NTR2 (NTR2) of Saccharomyces cerevisiae (strain ATCC 204508 / S288c) (Baker's yeast).